We begin with the raw amino-acid sequence, 168 residues long: Large ribosomal subunit protein uL29c (168 aa).

The disordered stretch occupies residues 1–20 (MLAIHSLSSTPCSSGLTSPP). Residues 1–58 (MLAIHSLSSTPCSSGLTSPPKSTLLTKSSFHGLRLPSVNLSSSLRLRVQTPPSSVVVM) constitute a chloroplast transit peptide.

In terms of assembly, component of the chloroplast large ribosomal subunit (LSU). Mature 70S chloroplast ribosomes of higher plants consist of a small (30S) and a large (50S) subunit. The 30S small subunit contains 1 molecule of ribosomal RNA (16S rRNA) and 24 different proteins. The 50S large subunit contains 3 rRNA molecules (23S, 5S and 4.5S rRNA) and 33 different proteins.

It is found in the plastid. The protein localises to the chloroplast. Component of the chloroplast ribosome (chloro-ribosome), a dedicated translation machinery responsible for the synthesis of chloroplast genome-encoded proteins, including proteins of the transcription and translation machinery and components of the photosynthetic apparatus. This chain is Large ribosomal subunit protein uL29c (RPL29), found in Spinacia oleracea (Spinach).